The sequence spans 614 residues: Putative ABC transporter ATP-binding protein MA_1747 (614 aa).

2 consecutive ABC transporter domains span residues 11 to 251 (VRLE…KLGI) and 319 to 552 (VLIE…AGLL). ATP-binding positions include 45-52 (GPSGCGKS) and 352-359 (GHNGAGKT).

This sequence belongs to the ABC transporter superfamily.

Its subcellular location is the cell membrane. Probably part of an ABC transporter complex. Responsible for energy coupling to the transport system. This is Putative ABC transporter ATP-binding protein MA_1747 from Methanosarcina acetivorans (strain ATCC 35395 / DSM 2834 / JCM 12185 / C2A).